We begin with the raw amino-acid sequence, 332 residues long: Endo-1,4-beta-xylanase B (332 aa).

Residues 2–331 enclose the GH10 domain; it reads STEIPSLSAS…KDSFWRIIGQ (330 aa). Glu134 functions as the Proton donor in the catalytic mechanism. Glu241 serves as the catalytic Nucleophile.

This sequence belongs to the glycosyl hydrolase 10 (cellulase F) family. Cytoplasmic xylanase subfamily.

It localises to the cytoplasm. The catalysed reaction is Endohydrolysis of (1-&gt;4)-beta-D-xylosidic linkages in xylans.. It functions in the pathway glycan degradation; xylan degradation. With respect to regulation, completely inhibited by Ag(2+), Cu(2+), Hg(2+), Mn(2+), Pb(2+) and Sn(2+). Strongly inhibited by Fe(2+) and Zn(2+). Co(2+) and Ni(2+) cause little inhibition while Ca(2+) and Mg(2+) do not affect enzyme activity, and Ba(2+) produces a small stimulating effect. Irreversibly inactivated by SDS in vitro. In terms of biological role, plays a role in plant xylan biodegradation, probably via the hydrolysis of short xylooligosaccharides resulting from extracellular xylan hydrolysis, once they have been transported inside cells. Shows similar activity on xylans of different rate of arabinose or methylglucuronic substitution. Also displays high activity on aryl-xylosides. Is active on xylotetraose and xylotriose, but does not hydrolyze xylobiose, indicating that XynB is a xylanase and not a beta-xylosidase. The polypeptide is Endo-1,4-beta-xylanase B (xynB) (Paenibacillus barcinonensis).